The following is a 283-amino-acid chain: Gap junction beta-1 protein (283 aa).

Topologically, residues 1 to 22 (MNWTGLYTLLSGVNRHSTAIGR) are cytoplasmic. A helical membrane pass occupies residues 23 to 45 (VWLSVIFIFRIMVLVVAAESVWG). The Extracellular portion of the chain corresponds to 46–75 (DEKSSFICNTLQPGCNSVCYDQFFPISHVR). A helical transmembrane segment spans residues 76–95 (LWSLQLILVSTPALLVAMHV). At 96–130 (AHQQHIEKKMLRLEGHGDPLHLEEVKRHKVHISGT) the chain is on the cytoplasmic side. Residues 131-153 (LWWAYVISVVFRLLFEAVFMYVF) traverse the membrane as a helical segment. The Extracellular segment spans residues 154-191 (YLLYPGYAMVRLVKCDVYPCPNTVDCFVSRPTEKTVFT). A helical membrane pass occupies residues 192–214 (VFMLAASGICIILNVAEVVYLII). Residues 215–283 (RACARRAQRR…AEKSDRCSAC (69 aa)) are Cytoplasmic-facing. Phosphoserine is present on residues Ser-233, Ser-258, Ser-266, and Ser-277.

This sequence belongs to the connexin family. Beta-type (group I) subfamily. As to quaternary structure, a connexon is composed of a hexamer of connexins. Interacts with CNST.

It is found in the cell membrane. The protein resides in the cell junction. It localises to the gap junction. In terms of biological role, one gap junction consists of a cluster of closely packed pairs of transmembrane channels, the connexons, through which materials of low MW diffuse from one cell to a neighboring cell. This is Gap junction beta-1 protein (GJB1) from Macaca fascicularis (Crab-eating macaque).